A 419-amino-acid chain; its full sequence is UDP-N-acetylglucosamine 1-carboxyvinyltransferase (419 aa).

22 to 23 provides a ligand contact to phosphoenolpyruvate; the sequence is KN. A UDP-N-acetyl-alpha-D-glucosamine-binding site is contributed by arginine 91. The active-site Proton donor is the cysteine 115. Cysteine 115 bears the 2-(S-cysteinyl)pyruvic acid O-phosphothioketal mark. Residues 120–124, 160–163, aspartate 305, and isoleucine 327 contribute to the UDP-N-acetyl-alpha-D-glucosamine site; these read RPVDL and KVSV.

Belongs to the EPSP synthase family. MurA subfamily.

It localises to the cytoplasm. It carries out the reaction phosphoenolpyruvate + UDP-N-acetyl-alpha-D-glucosamine = UDP-N-acetyl-3-O-(1-carboxyvinyl)-alpha-D-glucosamine + phosphate. Its pathway is cell wall biogenesis; peptidoglycan biosynthesis. Its function is as follows. Cell wall formation. Adds enolpyruvyl to UDP-N-acetylglucosamine. The sequence is that of UDP-N-acetylglucosamine 1-carboxyvinyltransferase from Serratia proteamaculans (strain 568).